Here is a 216-residue protein sequence, read N- to C-terminus: LexA repressor (216 aa).

The H-T-H motif DNA-binding region spans 28–48 (RAEIAAELGFSSANSAEEHLR). Residues Ser-134 and Lys-171 each act as for autocatalytic cleavage activity in the active site.

This sequence belongs to the peptidase S24 family. As to quaternary structure, homodimer.

The catalysed reaction is Hydrolysis of Ala-|-Gly bond in repressor LexA.. Its function is as follows. Represses a number of genes involved in the response to DNA damage (SOS response), including recA and lexA. In the presence of single-stranded DNA, RecA interacts with LexA causing an autocatalytic cleavage which disrupts the DNA-binding part of LexA, leading to derepression of the SOS regulon and eventually DNA repair. This is LexA repressor from Paraburkholderia phytofirmans (strain DSM 17436 / LMG 22146 / PsJN) (Burkholderia phytofirmans).